A 158-amino-acid polypeptide reads, in one-letter code: Phosphopantetheine adenylyltransferase (158 aa).

S9 serves as a coordination point for substrate. Residues 9–10 (SF) and H17 contribute to the ATP site. 3 residues coordinate substrate: K41, V73, and K87. ATP-binding positions include 88-90 (GLR), E98, and 122-128 (YSFVSSS).

The protein belongs to the bacterial CoaD family. In terms of assembly, homohexamer. Mg(2+) is required as a cofactor.

The protein resides in the cytoplasm. The catalysed reaction is (R)-4'-phosphopantetheine + ATP + H(+) = 3'-dephospho-CoA + diphosphate. It participates in cofactor biosynthesis; coenzyme A biosynthesis; CoA from (R)-pantothenate: step 4/5. Its function is as follows. Reversibly transfers an adenylyl group from ATP to 4'-phosphopantetheine, yielding dephospho-CoA (dPCoA) and pyrophosphate. The chain is Phosphopantetheine adenylyltransferase from Mycobacterium sp. (strain JLS).